A 542-amino-acid polypeptide reads, in one-letter code: Monocarboxylate transporter 3 (542 aa).

The Cytoplasmic portion of the chain corresponds to 1–19 (MGRADPEEGQLPAPVKPPD). The helical transmembrane segment at 20–40 (GGWGWIVLFGCFVITGFSYAF) threads the bilayer. Residues 41–63 (PKAVSVYFKELMKDFHVGYSDTA) are Extracellular-facing. Residues 64–84 (WISSIMLAMLYGTGPVCSIMV) traverse the membrane as a helical segment. Residues 85–93 (NQFGCRPVM) are Cytoplasmic-facing. A helical transmembrane segment spans residues 94 to 114 (LIGGLLASSGMILASFTTNII). Topologically, residues 115–119 (ELYLT) are extracellular. The chain crosses the membrane as a helical span at residues 120–140 (AGVLTGLGMALNFQPSLIMLG). Residues 141–152 (TYFDKRRPLANG) lie on the Cytoplasmic side of the membrane. The chain crosses the membrane as a helical span at residues 153 to 173 (LAAAGSPVFLSSLSPLGQVLL). Residues 174 to 181 (EKFGWRGG) lie on the Extracellular side of the membrane. A helical membrane pass occupies residues 182-202 (FLIMGGLLLNCCTCGAVMRPL). The Cytoplasmic portion of the chain corresponds to 203 to 265 (DAGMKRKTEK…LDFSIFSNRG (63 aa)). Residues 226 to 247 (GGKSEEGISTTDGTKKTKKAKK) form a disordered region. The chain crosses the membrane as a helical span at residues 266–286 (FIIYTISKFILVLGLFVPPIL). The Extracellular segment spans residues 287–301 (LVNYAKDTGVPDTEA). The chain crosses the membrane as a helical span at residues 302 to 322 (AFLLSIIGFIDIFARPACGMV). Residues 323 to 330 (AGLKWVRP) lie on the Cytoplasmic side of the membrane. The chain crosses the membrane as a helical span at residues 331-351 (HVAYLFSFAMLFNGLTDICSA). Residues 352–357 (RASNYT) lie on the Extracellular side of the membrane. A helical membrane pass occupies residues 358–378 (GLVIFCVFFGISYGMVGALQF). Over 379 to 392 (EVLMAIVGSQKFSS) the chain is Cytoplasmic. Residues 393 to 413 (AIGLVLLIEAFAVLIGPPSAG) form a helical membrane-spanning segment. The Extracellular segment spans residues 414-423 (RLVDALKNYE). A helical transmembrane segment spans residues 424-444 (VIFYLAGSEVVLSALFLAMAT). The Cytoplasmic portion of the chain corresponds to 445–542 (YCCLNRGKKT…ADQTVERDSF (98 aa)). The disordered stretch occupies residues 453-542 (KTPPPEKNPS…ADQTVERDSF (90 aa)). 2 basolateral sorting signal regions span residues 465 to 510 (GGSD…VEDE) and 511 to 532 (QSGEGGRCPEADGEVSSRAGCN). The span at 468–478 (DTEEAESDVQE) shows a compositional bias: acidic residues.

Belongs to the major facilitator superfamily. Monocarboxylate porter (TC 2.A.1.13) family. In terms of tissue distribution, retinal pigment epithelium.

The protein localises to the basolateral cell membrane. The enzyme catalyses (S)-lactate(in) + H(+)(in) = (S)-lactate(out) + H(+)(out). Functionally, probable retinal pigment epithelium (RPE)-specific proton-coupled L-lactate transporter. May facilitate transport of lactate and H(+) out of the retina and could therefore play a role in pH and ion homeostasis of the outer retina. This is Monocarboxylate transporter 3 (SLC16A8) from Gallus gallus (Chicken).